A 142-amino-acid chain; its full sequence is MAKKVQAYVKLQVAAGMANPSPPVGPALGQQGVNIMEFCKAFNARTESLEKGLPIPVVITVYADRSFTFVTKTPPAAVLLKKAAGIKSGSGKPNKDKVGKVTLDQVRQIAETKAADMTGATIETKMKSIAGTARSMGLVVEE.

Belongs to the universal ribosomal protein uL11 family. As to quaternary structure, part of the ribosomal stalk of the 50S ribosomal subunit. Interacts with L10 and the large rRNA to form the base of the stalk. L10 forms an elongated spine to which L12 dimers bind in a sequential fashion forming a multimeric L10(L12)X complex. One or more lysine residues are methylated.

Its function is as follows. Forms part of the ribosomal stalk which helps the ribosome interact with GTP-bound translation factors. This is Large ribosomal subunit protein uL11 from Haemophilus influenzae (strain 86-028NP).